A 358-amino-acid chain; its full sequence is tRNA-specific 2-thiouridylase MnmA (358 aa).

Residues 6–13 (AMSGGVDS) and leucine 32 each bind ATP. The Nucleophile role is filled by cysteine 101. Residues cysteine 101 and cysteine 193 are joined by a disulfide bond. Glycine 125 provides a ligand contact to ATP. The tract at residues 143–145 (KDQ) is interaction with tRNA. The Cysteine persulfide intermediate role is filled by cysteine 193.

It belongs to the MnmA/TRMU family.

The protein resides in the cytoplasm. The enzyme catalyses S-sulfanyl-L-cysteinyl-[protein] + uridine(34) in tRNA + AH2 + ATP = 2-thiouridine(34) in tRNA + L-cysteinyl-[protein] + A + AMP + diphosphate + H(+). In terms of biological role, catalyzes the 2-thiolation of uridine at the wobble position (U34) of tRNA, leading to the formation of s(2)U34. This Mycobacterium leprae (strain Br4923) protein is tRNA-specific 2-thiouridylase MnmA.